Reading from the N-terminus, the 338-residue chain is Aspartate carbamoyltransferase catalytic subunit (338 aa).

Carbamoyl phosphate-binding residues include arginine 59 and threonine 60. Lysine 87 serves as a coordination point for L-aspartate. Arginine 109, histidine 142, and glutamine 145 together coordinate carbamoyl phosphate. Arginine 182 and arginine 253 together coordinate L-aspartate. Glycine 294 and proline 295 together coordinate carbamoyl phosphate.

The protein belongs to the aspartate/ornithine carbamoyltransferase superfamily. ATCase family. Heterododecamer (2C3:3R2) of six catalytic PyrB chains organized as two trimers (C3), and six regulatory PyrI chains organized as three dimers (R2).

The catalysed reaction is carbamoyl phosphate + L-aspartate = N-carbamoyl-L-aspartate + phosphate + H(+). It participates in pyrimidine metabolism; UMP biosynthesis via de novo pathway; (S)-dihydroorotate from bicarbonate: step 2/3. Functionally, catalyzes the condensation of carbamoyl phosphate and aspartate to form carbamoyl aspartate and inorganic phosphate, the committed step in the de novo pyrimidine nucleotide biosynthesis pathway. The sequence is that of Aspartate carbamoyltransferase catalytic subunit from Prochlorococcus marinus (strain AS9601).